Here is a 472-residue protein sequence, read N- to C-terminus: Probable sterol O-acyltransferase 2 (472 aa).

Ser-12 is subject to Phosphoserine. 3 consecutive transmembrane segments (helical) span residues 61-81 (FTGFFVLFWVAVSIMIFMSFL), 111-131 (LAMSSMFLLAFPFQKIFALGY), and 135-155 (YGLGVYLYSILILLFLSHCVL). Residue Asn-161 is glycosylated (N-linked (GlcNAc...) asparagine). A helical membrane pass occupies residues 170-190 (FILHSMVILMKLHSYNVVNGW). N-linked (GlcNAc...) asparagine glycosylation is present at Asn-233. A run of 2 helical transmembrane segments spans residues 262–282 (IHYLIECALGTFGCIFLLVII) and 317–337 (TVAFLMFPFMLSFLLVFWVIF). The N-linked (GlcNAc...) asparagine glycan is linked to Asn-342. The FYXDWWN motif motif lies at 355–361 (FYDDWWN). His-409 is an active-site residue. The helical transmembrane segment at 452-472 (IAFWFSIIIGIALIAALYILF) threads the bilayer.

This sequence belongs to the membrane-bound acyltransferase family. Sterol o-acyltransferase subfamily.

The protein resides in the endoplasmic reticulum membrane. In terms of biological role, sterol O-acyltransferase that catalyzes the formation of stery esters. This Schizosaccharomyces pombe (strain 972 / ATCC 24843) (Fission yeast) protein is Probable sterol O-acyltransferase 2 (are2).